We begin with the raw amino-acid sequence, 330 residues long: ATP-dependent (S)-NAD(P)H-hydrate dehydratase (330 aa).

The 292-residue stretch at 36-327 folds into the YjeF C-terminal domain; sequence VIPLVRNTIP…QEINSAFKKL (292 aa). Residues G136 and 189–195 contribute to the (6S)-NADPHX site; that span reads NFMEFTR. Residues 229-233 and 248-257 contribute to the ATP site; these read KGEED and GSGRRCGGQG. D258 serves as a coordination point for (6S)-NADPHX.

Belongs to the NnrD/CARKD family. Requires Mg(2+) as cofactor.

It catalyses the reaction (6S)-NADHX + ATP = ADP + phosphate + NADH + H(+). The catalysed reaction is (6S)-NADPHX + ATP = ADP + phosphate + NADPH + H(+). In terms of biological role, catalyzes the dehydration of the S-form of NAD(P)HX at the expense of ATP, which is converted to ADP. Together with NAD(P)HX epimerase, which catalyzes the epimerization of the S- and R-forms, the enzyme allows the repair of both epimers of NAD(P)HX, a damaged form of NAD(P)H that is a result of enzymatic or heat-dependent hydration. This Danio rerio (Zebrafish) protein is ATP-dependent (S)-NAD(P)H-hydrate dehydratase.